The following is a 403-amino-acid chain: Imidazolonepropionase (403 aa).

Fe(3+) contacts are provided by histidine 74 and histidine 76. Histidine 74 and histidine 76 together coordinate Zn(2+). 4-imidazolone-5-propanoate is bound by residues arginine 83, tyrosine 146, and histidine 179. Residue tyrosine 146 coordinates N-formimidoyl-L-glutamate. Histidine 242 is a binding site for Fe(3+). Histidine 242 provides a ligand contact to Zn(2+). Residue glutamine 245 participates in 4-imidazolone-5-propanoate binding. Position 317 (aspartate 317) interacts with Fe(3+). Aspartate 317 provides a ligand contact to Zn(2+). Asparagine 319 and glycine 321 together coordinate N-formimidoyl-L-glutamate. Threonine 322 serves as a coordination point for 4-imidazolone-5-propanoate.

It belongs to the metallo-dependent hydrolases superfamily. HutI family. Zn(2+) serves as cofactor. Requires Fe(3+) as cofactor.

It localises to the cytoplasm. The catalysed reaction is 4-imidazolone-5-propanoate + H2O = N-formimidoyl-L-glutamate. It functions in the pathway amino-acid degradation; L-histidine degradation into L-glutamate; N-formimidoyl-L-glutamate from L-histidine: step 3/3. Its function is as follows. Catalyzes the hydrolytic cleavage of the carbon-nitrogen bond in imidazolone-5-propanoate to yield N-formimidoyl-L-glutamate. It is the third step in the universal histidine degradation pathway. This is Imidazolonepropionase from Sphingopyxis alaskensis (strain DSM 13593 / LMG 18877 / RB2256) (Sphingomonas alaskensis).